A 176-amino-acid chain; its full sequence is Superoxide oxidase CybB (176 aa).

The Cytoplasmic portion of the chain corresponds to 1–7 (MENKYSR). Residues 8–29 (LQISIHWLVFLLVIAAYCAMEF) form a helical membrane-spanning segment. Histidine 13 provides a ligand contact to heme b. The Periplasmic segment spans residues 30–39 (RGFFPRSDRP). The helical transmembrane segment at 40 to 64 (LINMIHVSCGISILVLMVVRLLLRL) threads the bilayer. Residue histidine 45 participates in heme b binding. Over 65–77 (KYPTPPIIPKPKP) the chain is Cytoplasmic. The helical transmembrane segment at 78–103 (MMTGLAHLGHLVIYLLFIALPVIGLV) threads the bilayer. Topologically, residues 104–135 (MMYNRGNPWFAFGLTMPYASEANFERVDSLKS) are periplasmic. Residues 136–158 (WHETLANLGYFVIGLHAAAALAH) traverse the membrane as a helical segment. Residues histidine 137 and histidine 151 each contribute to the heme b site. Topologically, residues 159 to 176 (HYFWKDNTLLRMMPRKRS) are cytoplasmic.

The protein belongs to the cytochrome b561 family. In terms of assembly, monomer. Heme b serves as cofactor.

It is found in the cell inner membrane. It carries out the reaction a ubiquinol + 2 O2 = 2 superoxide + a ubiquinone + 2 H(+). The catalysed reaction is a menaquinol + 2 O2 = 2 superoxide + a menaquinone + 2 H(+). Its activity is regulated as follows. Quinone binding to the enzyme accelerates the reaction with superoxide. In terms of biological role, B-type di-heme cytochrome. Catalyzes the oxidation of superoxide to molecular oxygen and transfers the extracted electrons to ubiquinone through the two hemes. Can also use menaquinone. The enzyme may be responsible for the detoxification of the superoxide anion produced in the membrane or at its surface. However, it can also efficiently catalyze the formation of superoxide from ubiquinol under physiological conditions. In Escherichia coli (strain K12), this protein is Superoxide oxidase CybB.